We begin with the raw amino-acid sequence, 178 residues long: MSGGKYVDSEGQLYTLPIREQGNIYKPNNKVMAEEMNEKQMYDAHTKEIDLVNRDPKHLNDDVVKIDFEDVIAEPEGTHSFDGIWKASFTTFTVTKYWFYRLLSSLVGIPVALIWGIYFAILSFLYIWAVVPCIKSFLIKIQCISRIYSICIHTFCDPLYEAIGKIFSNIRISMQKEI.

S2 carries the post-translational modification N-acetylserine. S2 is modified (phosphoserine). The interval 2–94 is required for homooligomerization; it reads SGGKYVDSEG…WKASFTTFTV (93 aa). At 2–104 the chain is on the cytoplasmic side; it reads SGGKYVDSEG…TKYWFYRLLS (103 aa). N6-acetyllysine; alternate is present on K5. A Glycyl lysine isopeptide (Lys-Gly) (interchain with G-Cter in ubiquitin); alternate cross-link involves residue K5. Y6 is subject to Phosphotyrosine. The residue at position 9 (S9) is a Phosphoserine. Y14 bears the Phosphotyrosine; by ABL1 mark. Position 25 is a phosphotyrosine (Y25). Residues K26, K30, K39, K47, and K57 each participate in a glycyl lysine isopeptide (Lys-Gly) (interchain with G-Cter in ubiquitin) cross-link. Positions 82-94 are interaction with CAVIN3; that stretch reads DGIWKASFTTFTV. An intramembrane region (helical) is located at residues 105 to 125; sequence SLVGIPVALIWGIYFAILSFL. At 126 to 178 the chain is on the cytoplasmic side; that stretch reads YIWAVVPCIKSFLIKIQCISRIYSICIHTFCDPLYEAIGKIFSNIRISMQKEI. The tract at residues 131 to 142 is interacts with SPRY1, SPRY2, SPRY3 and SPRY4; sequence VPCIKSFLIKIQ. Residues C133, C143, and C156 are each lipidated (S-palmitoyl cysteine). Residues 149–160 form an interacts with SPRY1, SPRY2, and SPRY4 region; sequence SICIHTFCDPLY. The segment at 167–178 is interacts with SPRY1, SPRY2, SPRY3 and SPRY4; sequence FSNIRISMQKEI.

It belongs to the caveolin family. Homooligomer. Interacts with GLIPR2. Interacts with NOSTRIN. Interacts with SNAP25 and STX1A. Interacts (via the N-terminus) with DPP4; the interaction is direct. Interacts with CTNNB1, CDH1 and JUP. Interacts with PACSIN2; this interaction induces membrane tubulation. Interacts with SLC7A9. Interacts with BMX and BTK. Interacts with TGFBR1. Interacts with CAVIN3 (via leucine-zipper domain) in a cholesterol-sensitive manner. Interacts with CAVIN1. Interacts with EHD2 in a cholesterol-dependent manner. Forms a ternary complex with UBXN6 and VCP; mediates CAV1 targeting to lysosomes for degradation. Interacts with ABCG1; this interaction regulates ABCG1-mediated cholesterol efflux. Interacts with NEU3; this interaction enhances NEU3 sialidase activity within caveola. Interacts (via C-terminus) with SPRY1, SPRY2 (via C-terminus), SPRY3, and SPRY4. Interacts with IGFBP5; this interaction allows trafficking of IGFBP5 from the plasma membrane to the nucleus. In terms of processing, phosphorylated at Tyr-14 by ABL1 in response to oxidative stress. Post-translationally, ubiquitinated. Undergo monoubiquitination and multi- and/or polyubiquitination. Monoubiquitination of N-terminal lysines promotes integration in a ternary complex with UBXN6 and VCP which promotes oligomeric CAV1 targeting to lysosomes for degradation. Ubiquitinated by ZNRF1; leading to degradation and modulation of the TLR4-mediated immune response.

The protein resides in the golgi apparatus membrane. The protein localises to the cell membrane. It is found in the membrane. It localises to the caveola. Its subcellular location is the membrane raft. In terms of biological role, may act as a scaffolding protein within caveolar membranes. Forms a stable heterooligomeric complex with CAV2 that targets to lipid rafts and drives caveolae formation. Mediates the recruitment of CAVIN proteins (CAVIN1/2/3/4) to the caveolae. Interacts directly with G-protein alpha subunits and can functionally regulate their activity. Involved in the costimulatory signal essential for T-cell receptor (TCR)-mediated T-cell activation. Its binding to DPP4 induces T-cell proliferation and NF-kappa-B activation in a T-cell receptor/CD3-dependent manner. Recruits CTNNB1 to caveolar membranes and may regulate CTNNB1-mediated signaling through the Wnt pathway. Negatively regulates TGFB1-mediated activation of SMAD2/3 by mediating the internalization of TGFBR1 from membrane rafts leading to its subsequent degradation. Binds 20(S)-hydroxycholesterol (20(S)-OHC). The sequence is that of Caveolin-1 (CAV1) from Atelerix albiventris (Middle-African hedgehog).